The following is a 49-amino-acid chain: uncharacterized protein (49 aa).

The helical transmembrane segment at 22–42 threads the bilayer; the sequence is AIVGISIMIIIAIGIYLIIEY.

Its subcellular location is the membrane. This is an uncharacterized protein from Methanocaldococcus jannaschii (strain ATCC 43067 / DSM 2661 / JAL-1 / JCM 10045 / NBRC 100440) (Methanococcus jannaschii).